A 535-amino-acid chain; its full sequence is NAD(P)H-quinone oxidoreductase chain 4 2 (535 aa).

Transmembrane regions (helical) follow at residues 9–29 (FPWL…IPLI), 51–71 (WFAL…FYVG), 106–126 (LILL…PVTL), 130–150 (LFYF…AVQD), 152–172 (LLFF…LSIW), 184–204 (FILY…AMAF), 227–247 (LLLY…FPLH), 258–278 (TAPV…YALM), 290–310 (LYFA…AALT), 326–346 (ISHM…GMSG), 347–367 (AMLQ…LVGA), 399–419 (LASL…VFIG), 432–452 (LVVV…LLSM), and 479–499 (VFII…PKLV).

It belongs to the complex I subunit 4 family.

It is found in the cellular thylakoid membrane. The enzyme catalyses a plastoquinone + NADH + (n+1) H(+)(in) = a plastoquinol + NAD(+) + n H(+)(out). The catalysed reaction is a plastoquinone + NADPH + (n+1) H(+)(in) = a plastoquinol + NADP(+) + n H(+)(out). Functionally, NDH-1 shuttles electrons from NAD(P)H, via FMN and iron-sulfur (Fe-S) centers, to quinones in the respiratory chain. The immediate electron acceptor for the enzyme in this species is believed to be plastoquinone. Couples the redox reaction to proton translocation (for every two electrons transferred, four hydrogen ions are translocated across the cytoplasmic membrane), and thus conserves the redox energy in a proton gradient. This Synechococcus sp. (strain JA-3-3Ab) (Cyanobacteria bacterium Yellowstone A-Prime) protein is NAD(P)H-quinone oxidoreductase chain 4 2.